Consider the following 367-residue polypeptide: Histidinol-phosphate aminotransferase 1 (367 aa).

Residue lysine 226 is modified to N6-(pyridoxal phosphate)lysine.

This sequence belongs to the class-II pyridoxal-phosphate-dependent aminotransferase family. Histidinol-phosphate aminotransferase subfamily. Homodimer. Requires pyridoxal 5'-phosphate as cofactor.

The catalysed reaction is L-histidinol phosphate + 2-oxoglutarate = 3-(imidazol-4-yl)-2-oxopropyl phosphate + L-glutamate. It functions in the pathway amino-acid biosynthesis; L-histidine biosynthesis; L-histidine from 5-phospho-alpha-D-ribose 1-diphosphate: step 7/9. The chain is Histidinol-phosphate aminotransferase 1 (hisC1) from Haemophilus influenzae (strain ATCC 51907 / DSM 11121 / KW20 / Rd).